The chain runs to 316 residues: MKALWAVLVVTLLAGCLAEGEPELEPEVTDRLAWQSGQPWEVALGRFWDYLRWVQTLSDQVQEELQSSQVTQELTVLMEDTMTELKAYKKELEEQLGPMAEETRARLAKEVQAAQSRLGADMEDLRNRLAQYRNEVHTMLGQSTEELRARLSTHLRKLRKRLMRDAEDLQKRLAVYKAGAREGAERGVGAIRERLGPLVEQGRQRTANLGAGAGKPLQDRAQALGARIRGRLEEVGNQARDRLEEMREQMEEVRAKVEEQAQQMRLQAEIFQARLKGWFEPLVEDMQRQWANLVEKIQASVAANPIPPSSVPQESP.

A signal peptide spans 1-18; it reads MKALWAVLVVTLLAGCLA. Repeat copies occupy residues 76–97, 98–119, 120–141, 142–163, 164–185, 186–207, 208–229, and 230–251. An 8 X 22 AA approximate tandem repeats region spans residues 76 to 251; sequence VLMEDTMTEL…RLEEMREQME (176 aa). The residue at position 139 (methionine 139) is a Methionine sulfoxide. At serine 143 the chain carries Phosphoserine. The segment at 154–164 is LDL and other lipoprotein receptors binding; it reads HLRKLRKRLMR. 158–161 lines the heparin pocket; sequence LRKR. Residues 206–286 are lipid-binding and lipoprotein association; it reads TANLGAGAGK…GWFEPLVEDM (81 aa). 225–232 provides a ligand contact to heparin; sequence GARIRGRL. The segment at 262–316 is homooligomerization; that stretch reads QQMRLQAEIFQARLKGWFEPLVEDMQRQWANLVEKIQASVAANPIPPSSVPQESP. A specificity for association with VLDL region spans residues 274-286; sequence RLKGWFEPLVEDM.

This sequence belongs to the apolipoprotein A1/A4/E family. Homotetramer. May interact with ABCA1; functionally associated with ABCA1 in the biogenesis of HDLs. May interact with APP/A4 amyloid-beta peptide; the interaction is extremely stable in vitro but its physiological significance is unclear. May interact with MAPT. May interact with MAP2. In the cerebrospinal fluid, interacts with secreted SORL1. Interacts with PMEL; this allows the loading of PMEL luminal fragment on ILVs to induce fibril nucleation. Post-translationally, APOE exists as multiple glycosylated and sialylated glycoforms within cells and in plasma. The extent of glycosylation and sialylation are tissue and context specific. In terms of processing, glycated in plasma VLDL. Phosphorylated by FAM20C in the extracellular medium.

The protein resides in the secreted. It is found in the extracellular space. Its subcellular location is the extracellular matrix. The protein localises to the extracellular vesicle. It localises to the endosome. The protein resides in the multivesicular body. Functionally, APOE is an apolipoprotein, a protein associating with lipid particles, that mainly functions in lipoprotein-mediated lipid transport between organs via the plasma and interstitial fluids. APOE is a core component of plasma lipoproteins and is involved in their production, conversion and clearance. Apolipoproteins are amphipathic molecules that interact both with lipids of the lipoprotein particle core and the aqueous environment of the plasma. As such, APOE associates with chylomicrons, chylomicron remnants, very low density lipoproteins (VLDL) and intermediate density lipoproteins (IDL) but shows a preferential binding to high-density lipoproteins (HDL). It also binds a wide range of cellular receptors including the LDL receptor/LDLR, the LDL receptor-related proteins LRP1, LRP2 and LRP8 and the very low-density lipoprotein receptor/VLDLR that mediate the cellular uptake of the APOE-containing lipoprotein particles. Finally, APOE also has a heparin-binding activity and binds heparan-sulfate proteoglycans on the surface of cells, a property that supports the capture and the receptor-mediated uptake of APOE-containing lipoproteins by cells. A main function of APOE is to mediate lipoprotein clearance through the uptake of chylomicrons, VLDLs, and HDLs by hepatocytes. APOE is also involved in the biosynthesis by the liver of VLDLs as well as their uptake by peripheral tissues ensuring the delivery of triglycerides and energy storage in muscle, heart and adipose tissues. By participating in the lipoprotein-mediated distribution of lipids among tissues, APOE plays a critical role in plasma and tissues lipid homeostasis. APOE is also involved in two steps of reverse cholesterol transport, the HDLs-mediated transport of cholesterol from peripheral tissues to the liver, and thereby plays an important role in cholesterol homeostasis. First, it is functionally associated with ABCA1 in the biogenesis of HDLs in tissues. Second, it is enriched in circulating HDLs and mediates their uptake by hepatocytes. APOE also plays an important role in lipid transport in the central nervous system, regulating neuron survival and sprouting. The sequence is that of Apolipoprotein E (Apoe) from Peromyscus leucopus (White-footed mouse).